A 406-amino-acid polypeptide reads, in one-letter code: uncharacterized protein (406 aa).

Helical transmembrane passes span Ser-7–Ile-27, Val-43–Ile-63, Leu-69–Leu-89, Leu-98–Leu-118, Gly-155–Phe-175, Ile-220–Leu-240, Trp-253–Tyr-273, Leu-297–Met-317, Val-352–Val-372, and Leu-374–Leu-394.

The protein belongs to the major facilitator superfamily.

The protein resides in the cell membrane. This is an uncharacterized protein from Bacillus subtilis (strain 168).